We begin with the raw amino-acid sequence, 141 residues long: Large ribosomal subunit protein uL11A (141 aa).

This sequence belongs to the universal ribosomal protein uL11 family. As to quaternary structure, part of the ribosomal stalk of the 50S ribosomal subunit. Interacts with L10 and the large rRNA to form the base of the stalk. L10 forms an elongated spine to which L12 dimers bind in a sequential fashion forming a multimeric L10(L12)X complex. Post-translationally, one or more lysine residues are methylated.

In terms of biological role, forms part of the ribosomal stalk which helps the ribosome interact with GTP-bound translation factors. This chain is Large ribosomal subunit protein uL11A, found in Halalkalibacterium halodurans (strain ATCC BAA-125 / DSM 18197 / FERM 7344 / JCM 9153 / C-125) (Bacillus halodurans).